A 973-amino-acid polypeptide reads, in one-letter code: MYNMRRLSLSPTFSMGFHLLVTVSLLFSHVDHVIAETEMEGEGNETGECTGSYYCKKGVILPIWEPQDPSFGDKIARATVYFVAMVYMFLGVSIIADRFMSSIEVITSQEKEITIKKPNGETTKTTVRIWNETVSNLTLMALGSSAPEILLSVIEVCGHNFTAGDLGPSTIVGSAAFNMFIIIALCVYVVPDGETRKIKHLRVFFVTAAWSIFAYTWLYIILSVISPGVVEVWEGLLTFFFFPICVVFAWVADRRLLFYKYVYKRYRAGKQRGMIIEHEGDRPSSKTEIEMDGKVVNSHVENFLDGALVLEVDERDQDDEEARREMARILKELKQKHPDKEIEQLIELANYQVLSQQQKSRAFYRIQATRLMTGAGNILKRHAADQARKAVSMHEVNTEVTENDPVSKIFFEQGTYQCLENCGTVALTIIRRGGDLTNTVFVDFRTEDGTANAGSDYEFTEGTVVFKPGDTQKEIRVGIIDDDIFEEDENFLVHLSNVKVSSEASEDGILEANHVSTLACLGSPSTATVTIFDDDHAGIFTFEEPVTHVSESIGIMEVKVLRTSGARGNVIVPYKTIEGTARGGGEDFEDTCGELEFQNDEIVKTISVKVIDDEEYEKNKTFFLEIGEPRLVEMSEKKALLLNELGGFTITGKYLFGQPVFRKVHAREHPILSTVITIADEYDDKQPLTSKEEEERRIAEMGRPILGEHTKLEVIIEESYEFKSTVDKLIKKTNLALVVGTNSWREQFIEAITVSAGEDDDDDECGEEKLPSCFDYVMHFLTVFWKVLFAFVPPTEYWNGWACFIVSILMIGLLTAFIGDLASHFGCTIGLKDSVTAVVFVALGTSVPDTFASKVAATQDQYADASIGNVTGSNAVNVFLGIGVAWSIAAIYHAANGEQFKVSPGTLAFSVTLFTIFAFINVGVLLYRRRPEIGGELGGPRTAKLLTSCLFVLLWLLYIFFSSLEAYCHIKGF.

The signal sequence occupies residues 1-35; it reads MYNMRRLSLSPTFSMGFHLLVTVSLLFSHVDHVIA. Over 36 to 74 the chain is Extracellular; that stretch reads ETEMEGEGNETGECTGSYYCKKGVILPIWEPQDPSFGDK. Asparagine 44 carries N-linked (GlcNAc...) asparagine glycosylation. The helical transmembrane segment at 75–95 threads the bilayer; it reads IARATVYFVAMVYMFLGVSII. Over 96–136 the chain is Cytoplasmic; it reads ADRFMSSIEVITSQEKEITIKKPNGETTKTTVRIWNETVSN. A helical membrane pass occupies residues 137 to 157; it reads LTLMALGSSAPEILLSVIEVC. Residues 141-181 form an Alpha-1 repeat; it reads ALGSSAPEILLSVIEVCGHNFTAGDLGPSTIVGSAAFNMFI. Residues 158 to 170 lie on the Extracellular side of the membrane; that stretch reads GHNFTAGDLGPST. An N-linked (GlcNAc...) asparagine glycan is attached at asparagine 160. The chain crosses the membrane as a helical span at residues 171 to 191; it reads IVGSAAFNMFIIIALCVYVVP. Residues 192-204 are Cytoplasmic-facing; the sequence is DGETRKIKHLRVF. A helical membrane pass occupies residues 205–225; it reads FVTAAWSIFAYTWLYIILSVI. The Extracellular portion of the chain corresponds to 226-231; the sequence is SPGVVE. A helical membrane pass occupies residues 232–252; it reads VWEGLLTFFFFPICVVFAWVA. Topologically, residues 253–800 are cytoplasmic; it reads DRRLLFYKYV…FVPPTEYWNG (548 aa). Residues 254-273 are putative calmodulin-binding region; the sequence is RRLLFYKYVYKRYRAGKQRG. Residues serine 285 and serine 392 each carry the phosphoserine modification. Calx-beta domains follow at residues 396-496 and 527-627; these read VNTE…VHLS and ATVT…LEIG. Ca(2+) is bound by residues glutamate 420, aspartate 456, aspartate 481, aspartate 482, isoleucine 484, glutamate 486, glutamate 489, aspartate 533, aspartate 534, aspartate 535, glutamate 551, aspartate 587, aspartate 613, glutamate 614, glutamate 615, and glutamate 718. The helical transmembrane segment at 801–821 threads the bilayer; that stretch reads WACFIVSILMIGLLTAFIGDL. At 822-824 the chain is on the extracellular side; it reads ASH. A helical transmembrane segment spans residues 825–845; the sequence is FGCTIGLKDSVTAVVFVALGT. An Alpha-2 repeat occupies 842–878; the sequence is ALGTSVPDTFASKVAATQDQYADASIGNVTGSNAVNV. The Cytoplasmic segment spans residues 846–874; sequence SVPDTFASKVAATQDQYADASIGNVTGSN. A helical transmembrane segment spans residues 875-895; that stretch reads AVNVFLGIGVAWSIAAIYHAA. The Extracellular segment spans residues 896–906; it reads NGEQFKVSPGT. The chain crosses the membrane as a helical span at residues 907-927; sequence LAFSVTLFTIFAFINVGVLLY. Topologically, residues 928 to 944 are cytoplasmic; it reads RRRPEIGGELGGPRTAK. The helical transmembrane segment at 945 to 965 threads the bilayer; it reads LLTSCLFVLLWLLYIFFSSLE. Over 966–973 the chain is Extracellular; it reads AYCHIKGF.

This sequence belongs to the Ca(2+):cation antiporter (CaCA) (TC 2.A.19) family. SLC8 subfamily. As to expression, detected primarily in heart and at lower levels in brain. Expressed in cardiac sarcolemma, brain, kidney, liver, pancreas, skeletal muscle, placenta and lung.

It is found in the cell membrane. It catalyses the reaction Ca(2+)(in) + 3 Na(+)(out) = Ca(2+)(out) + 3 Na(+)(in). With respect to regulation, activated by micromolar levels of Ca(2+). Mediates the exchange of one Ca(2+) ion against three to four Na(+) ions across the cell membrane, and thereby contributes to the regulation of cytoplasmic Ca(2+) levels and Ca(2+)-dependent cellular processes. Contributes to Ca(2+) transport during excitation-contraction coupling in muscle. In a first phase, voltage-gated channels mediate the rapid increase of cytoplasmic Ca(2+) levels due to release of Ca(2+) stores from the endoplasmic reticulum. SLC8A1 mediates the export of Ca(2+) from the cell during the next phase, so that cytoplasmic Ca(2+) levels rapidly return to baseline. Required for normal embryonic heart development and the onset of heart contractions. This chain is Sodium/calcium exchanger 1 (SLC8A1), found in Homo sapiens (Human).